A 333-amino-acid polypeptide reads, in one-letter code: Eukaryotic translation initiation factor 2 subunit 2 (333 aa).

Disordered regions lie at residues 1 to 119 (MSGD…DLDI) and 139 to 164 (ILEKDEALEDEDNKKDDGISFSNQTG). An N-acetylserine modification is found at Ser2. A phosphoserine mark is found at Ser2 and Ser13. Over residues 13-22 (SKKKKKKKKP) the composition is skewed to basic residues. Residues Thr31 and Thr36 each carry the phosphothreonine modification. Basic and acidic residues predominate over residues 40–51 (ETKEVEPEPTED). Ser67 is subject to Phosphoserine. Residues 96–105 (EGVKDLKIES) show a composition bias toward basic and acidic residues. Residue Lys102 forms a Glycyl lysine isopeptide (Lys-Gly) (interchain with G-Cter in SUMO2) linkage. A Phosphoserine modification is found at Ser105. 2 stretches are compositionally biased toward acidic residues: residues 106-118 (DVQEPTEPEDDLD) and 139-149 (ILEKDEALEDE). The residue at position 111 (Thr111) is a Phosphothreonine. Phosphoserine occurs at positions 158 and 218. An N6-acetyllysine mark is found at Lys265 and Lys293. The C4-type zinc-finger motif lies at 281 to 305 (CHTCRSPDTILQKDTRLYFLQCETC).

This sequence belongs to the eIF-2-beta/eIF-5 family. As to quaternary structure, eukaryotic translation initiation factor 2 eIF2 is a heterotrimeric complex composed of an alpha (EIF2S1), a beta (EIF2S2) and a gamma (EIF2S3) chain. eIF2 is member of the 43S pre-initiation complex (43S PIC). eIF2 forms a complex with at least CELF1/CUGBP1, CALR, CALR3, EIF2S1, EIF2S2, HSP90B1 and HSPA5. Interacts with BZW2/5MP1. Interacts with EIF5.

The protein localises to the cytoplasm. It localises to the cytosol. In terms of biological role, component of the eIF2 complex that functions in the early steps of protein synthesis by forming a ternary complex with GTP and initiator tRNA. This complex binds to a 40S ribosomal subunit, followed by mRNA binding to form the 43S pre-initiation complex (43S PIC). Junction of the 60S ribosomal subunit to form the 80S initiation complex is preceded by hydrolysis of the GTP bound to eIF2 and release of an eIF2-GDP binary complex. In order for eIF2 to recycle and catalyze another round of initiation, the GDP bound to eIF2 must exchange with GTP by way of a reaction catalyzed by eIF2B. The chain is Eukaryotic translation initiation factor 2 subunit 2 (EIF2S2) from Pongo abelii (Sumatran orangutan).